The primary structure comprises 76 residues: Putative defensin-like protein 121 (76 aa).

The signal sequence occupies residues 1–26 (MTYKATILAIFMIILVLGIGTKETRG). 4 cysteine pairs are disulfide-bonded: Cys-30–Cys-74, Cys-39–Cys-59, Cys-44–Cys-68, and Cys-48–Cys-70.

This sequence belongs to the DEFL family.

Its subcellular location is the secreted. This is Putative defensin-like protein 121 (LCR55) from Arabidopsis thaliana (Mouse-ear cress).